Here is a 384-residue protein sequence, read N- to C-terminus: Protein V (384 aa).

Disordered stretches follow at residues 1-23 (MDQDAFILKEDSEVEREAPGGRE) and 38-317 (SEPT…TKKG). The segment covering 7–20 (ILKEDSEVEREAPG) has biased composition (basic and acidic residues). Polar residues predominate over residues 50–59 (LHNTINTPQG). Ser68 is subject to Phosphoserine; by host. The span at 83-101 (RSGEESRVSGRTSKPEAEA) shows a compositional bias: basic and acidic residues. Ser125 carries the post-translational modification Phosphoserine; by host. Basic and acidic residues predominate over residues 150–168 (GIEDENREMAAHPDKRGED). Residues 191-206 (ASNNGRSMEPGSSHSA) are compositionally biased toward polar residues. Residues Ser192, Ser249, Ser257, and Ser260 each carry the phosphoserine; by host modification. 8 residues coordinate Zn(2+): His318, Cys337, Cys341, Cys353, Cys355, Cys358, Cys362, and Cys365.

The protein belongs to the paramyxoviruses V protein family. Interacts with host IFIH1/MDA5 and DHX58/LGP2. Interacts with host IRF3. Interacts with host RIGI regulatory protein (via CARDs domain) and host TRIM25 (via SPRY domain); these interactions prevent TRIM25-mediated ubiquitination of RIG-I and disrupts downstream RIG-I signaling.

It is found in the host cytoplasm. Plays an essential role in the inhibition of host immune response. Prevents the establishment of cellular antiviral state by blocking interferon-alpha/beta (IFN-alpha/beta) production and signaling pathway. Interacts with host IFIH1/MDA5 and DHX58/LGP2 to inhibit the transduction pathway involved in the activation of IFN-beta promoter, thus protecting the virus against cell antiviral state. Also interacts with and inhibits host IRF3. Blocks the type I interferon signaling pathway by disrupting the RIG-I signaling pathway. The protein is Protein V (P/V/C) of Sendai virus (strain Fushimi) (SeV).